The sequence spans 229 residues: GTP cyclohydrolase 1 (229 aa).

Zn(2+) contacts are provided by Cys-116, His-119, and Cys-187.

This sequence belongs to the GTP cyclohydrolase I family. In terms of assembly, toroid-shaped homodecamer, composed of two pentamers of five dimers.

It carries out the reaction GTP + H2O = 7,8-dihydroneopterin 3'-triphosphate + formate + H(+). The protein operates within cofactor biosynthesis; 7,8-dihydroneopterin triphosphate biosynthesis; 7,8-dihydroneopterin triphosphate from GTP: step 1/1. This Synechococcus sp. (strain JA-3-3Ab) (Cyanobacteria bacterium Yellowstone A-Prime) protein is GTP cyclohydrolase 1.